The primary structure comprises 277 residues: Putative thiosulfate sulfurtransferase mpst-4 (277 aa).

Rhodanese domains follow at residues 15-153 (NFGN…VVQS) and 155-243 (SKAE…QHLN). The Cysteine persulfide intermediate role is filled by C204.

It catalyses the reaction thiosulfate + hydrogen cyanide = thiocyanate + sulfite + 2 H(+). The polypeptide is Putative thiosulfate sulfurtransferase mpst-4 (Caenorhabditis elegans).